A 147-amino-acid polypeptide reads, in one-letter code: Large ribosomal subunit protein uL16 (147 aa).

It belongs to the universal ribosomal protein uL16 family. In terms of assembly, part of the 50S ribosomal subunit.

Functionally, binds 23S rRNA and is also seen to make contacts with the A and possibly P site tRNAs. The protein is Large ribosomal subunit protein uL16 of Lactobacillus delbrueckii subsp. bulgaricus (strain ATCC 11842 / DSM 20081 / BCRC 10696 / JCM 1002 / NBRC 13953 / NCIMB 11778 / NCTC 12712 / WDCM 00102 / Lb 14).